The following is a 391-amino-acid chain: Origin recognition complex subunit 2 (391 aa).

The disordered stretch occupies residues 1–43 (MEEYTDSGEDKNVYSDDDNDYFTASTQNNRTSKNTDSSPLDPK). Residues 22-38 (FTASTQNNRTSKNTDSS) are compositionally biased toward polar residues.

This sequence belongs to the ORC2 family. As to quaternary structure, ORC is composed of six subunits.

Its subcellular location is the nucleus. Its function is as follows. Component of the origin recognition complex (ORC) that binds origins of replication. DNA-binding is ATP-dependent, however specific DNA sequences that define origins of replication have not been identified so far. ORC is required to assemble the pre-replication complex necessary to initiate DNA replication. The sequence is that of Origin recognition complex subunit 2 (orcB) from Dictyostelium discoideum (Social amoeba).